A 368-amino-acid chain; its full sequence is Histidinol-phosphate aminotransferase (368 aa).

N6-(pyridoxal phosphate)lysine is present on K215.

This sequence belongs to the class-II pyridoxal-phosphate-dependent aminotransferase family. Histidinol-phosphate aminotransferase subfamily. Homodimer. The cofactor is pyridoxal 5'-phosphate.

It carries out the reaction L-histidinol phosphate + 2-oxoglutarate = 3-(imidazol-4-yl)-2-oxopropyl phosphate + L-glutamate. It functions in the pathway amino-acid biosynthesis; L-histidine biosynthesis; L-histidine from 5-phospho-alpha-D-ribose 1-diphosphate: step 7/9. This Buchnera aphidicola subsp. Acyrthosiphon pisum (strain 5A) protein is Histidinol-phosphate aminotransferase.